Reading from the N-terminus, the 198-residue chain is MYEYIKGEYMGINKDYIIIENNGIGYKIFTSGATMSSMPCCGEKIKIYIEQIVREDFIGLYGFESLEELDMFKLLLSINGVGAKAALSLLSISRLNNLKYAIITGDEKHLCRGTGIGKKIAGRIILELKDKLKSDELLNCIDEFDDVTQDNSLALSEALSALISLGYTEKEAEKVLKDVDKSESVENIIKSALVKLMG.

The tract at residues 1–64 (MYEYIKGEYM…EDFIGLYGFE (64 aa)) is domain I. The interval 65–143 (SLEELDMFKL…SDELLNCIDE (79 aa)) is domain II. Residues 144 to 154 (FDDVTQDNSLA) form a flexible linker region. The tract at residues 154–198 (ALSEALSALISLGYTEKEAEKVLKDVDKSESVENIIKSALVKLMG) is domain III.

The protein belongs to the RuvA family. Homotetramer. Forms an RuvA(8)-RuvB(12)-Holliday junction (HJ) complex. HJ DNA is sandwiched between 2 RuvA tetramers; dsDNA enters through RuvA and exits via RuvB. An RuvB hexamer assembles on each DNA strand where it exits the tetramer. Each RuvB hexamer is contacted by two RuvA subunits (via domain III) on 2 adjacent RuvB subunits; this complex drives branch migration. In the full resolvosome a probable DNA-RuvA(4)-RuvB(12)-RuvC(2) complex forms which resolves the HJ.

It localises to the cytoplasm. In terms of biological role, the RuvA-RuvB-RuvC complex processes Holliday junction (HJ) DNA during genetic recombination and DNA repair, while the RuvA-RuvB complex plays an important role in the rescue of blocked DNA replication forks via replication fork reversal (RFR). RuvA specifically binds to HJ cruciform DNA, conferring on it an open structure. The RuvB hexamer acts as an ATP-dependent pump, pulling dsDNA into and through the RuvAB complex. HJ branch migration allows RuvC to scan DNA until it finds its consensus sequence, where it cleaves and resolves the cruciform DNA. The sequence is that of Holliday junction branch migration complex subunit RuvA from Clostridium botulinum (strain Alaska E43 / Type E3).